A 376-amino-acid polypeptide reads, in one-letter code: UDP-N-acetylenolpyruvoylglucosamine reductase (376 aa).

The region spanning 48-219 (VGGPARHLVI…LDVTMQFNLG (172 aa)) is the FAD-binding PCMH-type domain. Arginine 196 is a catalytic residue. Serine 274 acts as the Proton donor in catalysis. Glutamate 368 is an active-site residue.

This sequence belongs to the MurB family. FAD serves as cofactor.

The protein resides in the cytoplasm. The catalysed reaction is UDP-N-acetyl-alpha-D-muramate + NADP(+) = UDP-N-acetyl-3-O-(1-carboxyvinyl)-alpha-D-glucosamine + NADPH + H(+). It functions in the pathway cell wall biogenesis; peptidoglycan biosynthesis. In terms of biological role, cell wall formation. This is UDP-N-acetylenolpyruvoylglucosamine reductase from Cutibacterium acnes (strain DSM 16379 / KPA171202) (Propionibacterium acnes).